The sequence spans 738 residues: Exocyst complex component 3 (738 aa).

The stretch at 28–91 (LEKVEQYRHR…DEVERLLRGV (64 aa)) forms a coiled coil.

Belongs to the SEC6 family. In terms of assembly, the exocyst complex is composed of Sec3/Exoc1, Sec5/Exoc2, Sec6/Exoc3, Sec8/Exoc4, Sec10/Exoc5, Sec15/Exoc6, Exo70/Exoc7 and Exo84/Exoc8.

Component of the exocyst complex involved in the docking of exocytic vesicles with fusion sites on the plasma membrane. The polypeptide is Exocyst complex component 3 (Drosophila melanogaster (Fruit fly)).